A 161-amino-acid polypeptide reads, in one-letter code: Beta-lactoglobulin-1 (161 aa).

Intrachain disulfides connect cysteine 66–cysteine 159 and cysteine 106–cysteine 119.

Belongs to the calycin superfamily. Lipocalin family. Monomer. In terms of tissue distribution, synthesized in mammary gland and secreted in milk.

The protein resides in the secreted. Functionally, primary component of whey, it binds retinol and is probably involved in the transport of that molecule. This Canis lupus familiaris (Dog) protein is Beta-lactoglobulin-1 (LGB1).